Here is a 362-residue protein sequence, read N- to C-terminus: 3-isopropylmalate dehydrogenase (362 aa).

Arg97, Arg107, Arg135, and Asp225 together coordinate substrate. Residues Asp225, Asp249, and Asp253 each coordinate Mg(2+). 283 to 295 (GSAPDIAHKNLAN) contacts NAD(+).

The protein belongs to the isocitrate and isopropylmalate dehydrogenases family. LeuB type 1 subfamily. Homodimer. The cofactor is Mg(2+). Requires Mn(2+) as cofactor.

It localises to the cytoplasm. It catalyses the reaction (2R,3S)-3-isopropylmalate + NAD(+) = 4-methyl-2-oxopentanoate + CO2 + NADH. It participates in amino-acid biosynthesis; L-leucine biosynthesis; L-leucine from 3-methyl-2-oxobutanoate: step 3/4. Functionally, catalyzes the oxidation of 3-carboxy-2-hydroxy-4-methylpentanoate (3-isopropylmalate) to 3-carboxy-4-methyl-2-oxopentanoate. The product decarboxylates to 4-methyl-2 oxopentanoate. The chain is 3-isopropylmalate dehydrogenase from Prochlorococcus marinus (strain SARG / CCMP1375 / SS120).